A 294-amino-acid chain; its full sequence is Acetyl-coenzyme A carboxylase carboxyl transferase subunit beta (294 aa).

The CoA carboxyltransferase N-terminal domain occupies 25 to 294 (VWTKCTSCEQ…PLVVPVDGSH (270 aa)). Residues Cys-29, Cys-32, Cys-48, and Cys-51 each coordinate Zn(2+). Residues 29 to 51 (CTSCEQVLYSAELERNLEVCPKC) form a C4-type zinc finger.

Belongs to the AccD/PCCB family. Acetyl-CoA carboxylase is a heterohexamer composed of biotin carboxyl carrier protein (AccB), biotin carboxylase (AccC) and two subunits each of ACCase subunit alpha (AccA) and ACCase subunit beta (AccD). Zn(2+) serves as cofactor.

It is found in the cytoplasm. It catalyses the reaction N(6)-carboxybiotinyl-L-lysyl-[protein] + acetyl-CoA = N(6)-biotinyl-L-lysyl-[protein] + malonyl-CoA. Its pathway is lipid metabolism; malonyl-CoA biosynthesis; malonyl-CoA from acetyl-CoA: step 1/1. In terms of biological role, component of the acetyl coenzyme A carboxylase (ACC) complex. Biotin carboxylase (BC) catalyzes the carboxylation of biotin on its carrier protein (BCCP) and then the CO(2) group is transferred by the transcarboxylase to acetyl-CoA to form malonyl-CoA. The chain is Acetyl-coenzyme A carboxylase carboxyl transferase subunit beta from Aliivibrio fischeri (strain ATCC 700601 / ES114) (Vibrio fischeri).